We begin with the raw amino-acid sequence, 697 residues long: Phosphatase and actin regulator 4-B (697 aa).

The RPEL 1 repeat unit spans residues 42–67; the sequence is EVLERKISMRKPREELVKRGLIVDVP. Disordered regions lie at residues 63–381 and 450–569; these read IVDV…LTLA and LKVP…SKDE. A compositionally biased stretch (basic and acidic residues) spans 189–202; sequence HVPEKTSEKYRPKS. 2 stretches are compositionally biased toward pro residues: residues 317-326 and 370-380; these read PSPPLPPKRA and APNPPVPPLTL. Composition is skewed to acidic residues over residues 454–469, 501–514, and 522–532; these read DDDD…DESL, QEED…DTDS, and EEDEDEEEEET. RPEL repeat units lie at residues 579–604 and 616–641; these read TQLN…QKNE and RRLT…RFNE.

This sequence belongs to the phosphatase and actin regulator family. As to quaternary structure, binds ppp1ca and actin.

The protein resides in the cytoplasm. Its subcellular location is the cell projection. It is found in the lamellipodium. Functionally, regulator of protein phosphatase 1 (PP1) required for neural tube and optic fissure closure, and enteric neural crest cell (ENCCs) migration during development. Acts as an activator of PP1. During neural tube closure, localizes to the ventral neural tube and activates PP1, leading to down-regulate cell proliferation within cranial neural tissue and the neural retina. Also acts as a regulator of migration of enteric neural crest cells (ENCCs) by activating PP1, leading to repression of the integrin signaling through the rho/rock pathway. This Xenopus laevis (African clawed frog) protein is Phosphatase and actin regulator 4-B (phactr4-b).